The following is a 561-amino-acid chain: Potassium-transporting ATPase potassium-binding subunit (561 aa).

10 helical membrane-spanning segments follow: residues 4 to 24, 65 to 85, 133 to 153, 177 to 197, 253 to 273, 285 to 305, 380 to 400, 417 to 437, 484 to 504, and 528 to 548; these read IVMQ…PLGI, AVSV…VLML, IGLT…LFAV, LYIL…QGVV, FTNL…VVMF, AIMT…TISE, GLYG…LLVG, MVCL…AVAV, MVGA…ALYL, and FIGL…LPAL.

Belongs to the KdpA family. As to quaternary structure, the system is composed of three essential subunits: KdpA, KdpB and KdpC.

It localises to the cell membrane. In terms of biological role, part of the high-affinity ATP-driven potassium transport (or Kdp) system, which catalyzes the hydrolysis of ATP coupled with the electrogenic transport of potassium into the cytoplasm. This subunit binds the extracellular potassium ions and delivers the ions to the membrane domain of KdpB through an intramembrane tunnel. The chain is Potassium-transporting ATPase potassium-binding subunit from Listeria monocytogenes serotype 4b (strain F2365).